Here is a 156-residue protein sequence, read N- to C-terminus: MSINATLFVQAIVFLILVLFTMKFVWPPITKALDERAQKIADGLAAADRAKTELAAADQRVKQELAAASNEIATRLADAERRAQAIIEEAKARANDEGNKIVAAARAEAEQQAIQAREALREQVAALAVKGAEQILRKEVNAGVHADLLNRLKTEL.

The helical transmembrane segment at 7–27 (LFVQAIVFLILVLFTMKFVWP) threads the bilayer.

The protein belongs to the ATPase B chain family. As to quaternary structure, F-type ATPases have 2 components, F(1) - the catalytic core - and F(0) - the membrane proton channel. F(1) has five subunits: alpha(3), beta(3), gamma(1), delta(1), epsilon(1). F(0) has three main subunits: a(1), b(2) and c(10-14). The alpha and beta chains form an alternating ring which encloses part of the gamma chain. F(1) is attached to F(0) by a central stalk formed by the gamma and epsilon chains, while a peripheral stalk is formed by the delta and b chains.

The protein localises to the cell inner membrane. In terms of biological role, f(1)F(0) ATP synthase produces ATP from ADP in the presence of a proton or sodium gradient. F-type ATPases consist of two structural domains, F(1) containing the extramembraneous catalytic core and F(0) containing the membrane proton channel, linked together by a central stalk and a peripheral stalk. During catalysis, ATP synthesis in the catalytic domain of F(1) is coupled via a rotary mechanism of the central stalk subunits to proton translocation. Its function is as follows. Component of the F(0) channel, it forms part of the peripheral stalk, linking F(1) to F(0). This chain is ATP synthase subunit b, found in Acidovorax sp. (strain JS42).